The chain runs to 367 residues: Choline-phosphate cytidylyltransferase A (367 aa).

The residue at position 1 (Met1) is an N-acetylmethionine. The tract at residues 1–33 (MDAQCSAKVNARKRRKEAPGPNGATEEDGVPSK) is disordered. Lys8 carries the post-translational modification N6-acetyllysine. Residues Ile84, Phe85, His92, and Lys122 each coordinate CTP. 2 residues coordinate phosphocholine: Lys122 and Trp151. 7 residues coordinate CTP: His168, Asp169, Tyr173, Gln195, Arg196, Thr197, and Ile200. Amphipathic regions lie at residues 228–287 (KELN…EFIG) and 298–315 (ALKH…QAIS). Position 233 is a phosphoserine (Ser233). Positions 272 to 293 (IDLIQKWEEKSREFIGSFLEMF) are autoinhibitory (AI). The segment at 313–367 (AISPKQSPSSSPTRERSPSPSFRWPFSGKTSPPCSPANLSRHKAAAYDISEDEED) is disordered. Residues Ser315, Ser319, Ser321, Ser322, and Ser323 each carry the phosphoserine modification. Repeat unit 1 spans residues 319-324 (SPSSSP). Positions 319 to 339 (SPSSSPTRERSPSPSFRWPFS) are enriched in low complexity. Thr325 is subject to Phosphothreonine. Ser329, Ser331, and Ser333 each carry phosphoserine. A 2; approximate repeat occupies 329-333 (SPSPS). Thr342 carries the phosphothreonine modification. Residues Ser343, Ser347, Ser352, and Ser362 each carry the phosphoserine modification. Repeat 3 spans residues 343 to 348 (SPPCSP).

This sequence belongs to the cytidylyltransferase family. As to quaternary structure, homodimer. In terms of processing, the serine residues of the C-terminus are phosphorylated. The inactive soluble form is stabilized by phosphorylation, the active membrane bound form is promoted by anionic lipids or diacylglycerol, and is stabilized by dephosphorylation. Monoubiquitinated by the SCF(FBXL2) complex, leading to proteasomal degradation. Brain, placenta, liver, fetal and adult lung.

It is found in the cytoplasm. The protein localises to the cytosol. The protein resides in the membrane. Its subcellular location is the endoplasmic reticulum membrane. It localises to the nucleus. The catalysed reaction is phosphocholine + CTP + H(+) = CDP-choline + diphosphate. It participates in phospholipid metabolism; phosphatidylcholine biosynthesis; phosphatidylcholine from phosphocholine: step 1/2. Its activity is regulated as follows. Interconverts between an inactive cytosolic form and an active membrane-bound form. Activation involves disruption of an inhibitory interaction between helices at the base of the active site and the autoinhibitory (AI) region. Activated by anionic lipid vesicles and by oleic acid or diacylglycerol-containing phosphatidylcholine vesicles. In terms of biological role, catalyzes the key rate-limiting step in the CDP-choline pathway for phosphatidylcholine biosynthesis. The polypeptide is Choline-phosphate cytidylyltransferase A (PCYT1A) (Homo sapiens (Human)).